A 190-amino-acid chain; its full sequence is MARANEIKRGMVVNYNDKLLLVKDIDVQSPSARGASTLYKMRFSDVRTGLKVEERFKGDDILDTITLTRRTVTFSYIDGDEYVFMDDEDYTPYLFKKDQIEEELLFIPEGGMPGIQVLSWDGQIIALELPQTVDLEIVDTAPGIKGASASARNKPATMSTGLTIPVPEYLSAGEKIRIHIPERRYMGRAD.

This sequence belongs to the elongation factor P family.

The sequence is that of Elongation factor P-like protein from Pectobacterium carotovorum subsp. carotovorum (strain PC1).